The chain runs to 240 residues: Guanine nucleotide exchange factor sopE2 (240 aa).

Positions 78–240 (LTSKTVKDFM…IANKYLQNAS (163 aa)) are GEF catalytic domain.

The protein belongs to the GEF (guanine exchange factor) SopE family.

It localises to the secreted. Functionally, activator for CDC42 by directly engaging this Rho GTPase and acting as potent guanine nucleotide exchange factor (GEF). This activation results in actin cytoskeleton rearrangements and stimulates membrane ruffling, promoting bacterial entry into non-phagocytic cells. Also activates NF-kB, p38 and ERK kinases, which are known to be involved in the induction of IL-8 expression. Chaperone InvB is required for secretion, translocation and stabilization of intracellular levels of sopE2. The chain is Guanine nucleotide exchange factor sopE2 (sopE2) from Salmonella typhimurium (strain LT2 / SGSC1412 / ATCC 700720).